Reading from the N-terminus, the 180-residue chain is 3-hydroxyanthranilate 3,4-dioxygenase (180 aa).

Position 46 (Arg-46) interacts with O2. His-50, Glu-56, and His-94 together coordinate Fe cation. Residue Glu-56 coordinates substrate. 2 residues coordinate substrate: Arg-98 and Glu-109. Fe cation is bound by residues Cys-124, Cys-127, Cys-161, and Cys-164.

This sequence belongs to the 3-HAO family. Homodimer. Requires Fe(2+) as cofactor.

The catalysed reaction is 3-hydroxyanthranilate + O2 = (2Z,4Z)-2-amino-3-carboxymuconate 6-semialdehyde. It functions in the pathway cofactor biosynthesis; NAD(+) biosynthesis; quinolinate from L-kynurenine: step 3/3. Functionally, catalyzes the oxidative ring opening of 3-hydroxyanthranilate to 2-amino-3-carboxymuconate semialdehyde, which spontaneously cyclizes to quinolinate. The chain is 3-hydroxyanthranilate 3,4-dioxygenase from Ruegeria pomeroyi (strain ATCC 700808 / DSM 15171 / DSS-3) (Silicibacter pomeroyi).